A 444-amino-acid polypeptide reads, in one-letter code: F-box/FBD/LRR-repeat protein At5g53840 (444 aa).

The 47-residue stretch at 17–63 folds into the F-box domain; that stretch reads EERLSQLPDHLICVILSHLSTKDAVRTSILSTRWRNLWQLVPVLDFD. LRR repeat units follow at residues 103-123, 124-150, 151-171, 172-197, 199-224, 226-252, 273-299, 300-321, 322-347, 369-396, and 398-423; these read YYLT…IDIS, VFTC…KLSR, VTMV…DLDF, VNFT…TIVK, SEDN…RFDR, NGLV…EFIN, NRSM…TIKD, IFHY…LSAV, CSIS…SLKL, VSSL…YFLE, and STIL…HIRQ. One can recognise an FBD domain in the interval 356–408; that stretch reads EEVMSSTVPPPCLVSSLKFVKLESQLLGCGTELKVARYFLENSTILEKLTLKI.

The sequence is that of F-box/FBD/LRR-repeat protein At5g53840 from Arabidopsis thaliana (Mouse-ear cress).